The sequence spans 257 residues: UPF0246 protein Rsph17025_0016 (257 aa).

This sequence belongs to the UPF0246 family.

The sequence is that of UPF0246 protein Rsph17025_0016 from Cereibacter sphaeroides (strain ATCC 17025 / ATH 2.4.3) (Rhodobacter sphaeroides).